Consider the following 91-residue polypeptide: Potassium channel toxin BmTXK-beta-2 (91 aa).

The N-terminal stretch at 1 to 19 is a signal peptide; sequence MQRNLVVLLFLGMVALSSC. Residues 20–27 constitute a propeptide that is removed on maturation; that stretch reads GLREKHFQ. A BetaSPN-type CS-alpha/beta domain is found at 54 to 91; that stretch reads QFGCPAYQGYCDDHCQDIKKEEGFCHGFKCKCGIPMGF. 3 disulfides stabilise this stretch: cysteine 57/cysteine 78, cysteine 64/cysteine 83, and cysteine 68/cysteine 85.

It belongs to the long chain scorpion toxin family. Class 1 subfamily. In terms of tissue distribution, expressed by the venom gland.

The protein resides in the secreted. Functionally, inhibits voltage-gated potassium channel. In Olivierus martensii (Manchurian scorpion), this protein is Potassium channel toxin BmTXK-beta-2.